The primary structure comprises 37 residues: Photosystem I reaction center subunit VIII (37 aa).

Residues 9 to 29 traverse the membrane as a helical segment; the sequence is SILVTLVGLVFPAFAMASLFL.

This sequence belongs to the PsaI family.

It localises to the plastid. Its subcellular location is the chloroplast thylakoid membrane. In terms of biological role, may help in the organization of the PsaL subunit. This is Photosystem I reaction center subunit VIII from Pelargonium hortorum (Common geranium).